The chain runs to 605 residues: DNA mismatch repair protein MutL (605 aa).

The protein belongs to the DNA mismatch repair MutL/HexB family.

In terms of biological role, this protein is involved in the repair of mismatches in DNA. It is required for dam-dependent methyl-directed DNA mismatch repair. May act as a 'molecular matchmaker', a protein that promotes the formation of a stable complex between two or more DNA-binding proteins in an ATP-dependent manner without itself being part of a final effector complex. This is DNA mismatch repair protein MutL from Exiguobacterium sp. (strain ATCC BAA-1283 / AT1b).